We begin with the raw amino-acid sequence, 111 residues long: Resistin-like alpha (111 aa).

Positions 1-23 (MKTATCSLLICVFLLQLMVPVNT) are cleaved as a signal peptide. Cystine bridges form between cysteine 55-cysteine 108, cysteine 67-cysteine 107, cysteine 76-cysteine 93, cysteine 78-cysteine 95, and cysteine 82-cysteine 97.

This sequence belongs to the resistin/FIZZ family. Monomer. As to expression, highest levels in adipose tissue.

The protein localises to the secreted. Probable hormone. Plays a role in pulmonary vascular remodeling. The sequence is that of Resistin-like alpha (Retnla) from Rattus norvegicus (Rat).